The primary structure comprises 227 residues: Large ribosomal subunit protein uL1 (227 aa).

The protein belongs to the universal ribosomal protein uL1 family. As to quaternary structure, part of the 50S ribosomal subunit.

Binds directly to 23S rRNA. The L1 stalk is quite mobile in the ribosome, and is involved in E site tRNA release. In terms of biological role, protein L1 is also a translational repressor protein, it controls the translation of the L11 operon by binding to its mRNA. The polypeptide is Large ribosomal subunit protein uL1 (Mesoplasma florum (strain ATCC 33453 / NBRC 100688 / NCTC 11704 / L1) (Acholeplasma florum)).